A 297-amino-acid chain; its full sequence is Phosphoribosylaminoimidazole-succinocarboxamide synthase (297 aa).

It belongs to the SAICAR synthetase family.

It catalyses the reaction 5-amino-1-(5-phospho-D-ribosyl)imidazole-4-carboxylate + L-aspartate + ATP = (2S)-2-[5-amino-1-(5-phospho-beta-D-ribosyl)imidazole-4-carboxamido]succinate + ADP + phosphate + 2 H(+). Its pathway is purine metabolism; IMP biosynthesis via de novo pathway; 5-amino-1-(5-phospho-D-ribosyl)imidazole-4-carboxamide from 5-amino-1-(5-phospho-D-ribosyl)imidazole-4-carboxylate: step 1/2. This Corynebacterium glutamicum (strain R) protein is Phosphoribosylaminoimidazole-succinocarboxamide synthase.